Reading from the N-terminus, the 354-residue chain is E2F transcription factor-like E2FF (354 aa).

Residues 21–86 (RKEKSLGVLV…RGKNQYSWKG (66 aa)) mediate DNA binding. Residues 104-143 (ERLGYSSSNNSDKVSNGCEREEPLTLTPDDQENSSSSKMD) are disordered. Over residues 108-117 (YSSSNNSDKV) the composition is skewed to polar residues. Residues 145 to 225 (KKEKSLWLLA…TRKPAYRWLG (81 aa)) mediate DNA binding.

It belongs to the E2F/DP family. In terms of tissue distribution, high expression in young cotyledons and leaves, hypocotyls, shoot apical meristem, roots and mature pollen grains, moderate in developing trichomes, flowers and at early stages of developing anthers, and barely detectable in mature leaves. Not detected in primary root meristem, emerging lateral roots, pistils, developing embryos and siliques.

The protein resides in the nucleus. It is found in the cytoplasm. Inhibitor of E2F-dependent activation of gene expression. Binds specifically the E2 recognition site without interacting with DP proteins and prevents transcription activation by E2F/DP heterodimers. Does not bind retinoblastoma-related proteins. Acts as a growth regulator but is not associated with changes in the expression of cell cycle marker genes or in nuclear ploidy levels. Has no effect on cell proliferation, but may repress cell wall biosynthesis genes during cell elongation in differentiated cells. This Arabidopsis thaliana (Mouse-ear cress) protein is E2F transcription factor-like E2FF (E2FF).